We begin with the raw amino-acid sequence, 206 residues long: Ribosomal RNA large subunit methyltransferase E (206 aa).

S-adenosyl-L-methionine-binding residues include Gly-60, Trp-62, Asp-80, Asp-96, and Asp-121. The active-site Proton acceptor is the Lys-161.

This sequence belongs to the class I-like SAM-binding methyltransferase superfamily. RNA methyltransferase RlmE family.

It localises to the cytoplasm. It catalyses the reaction uridine(2552) in 23S rRNA + S-adenosyl-L-methionine = 2'-O-methyluridine(2552) in 23S rRNA + S-adenosyl-L-homocysteine + H(+). In terms of biological role, specifically methylates the uridine in position 2552 of 23S rRNA at the 2'-O position of the ribose in the fully assembled 50S ribosomal subunit. In Francisella tularensis subsp. tularensis (strain FSC 198), this protein is Ribosomal RNA large subunit methyltransferase E.